The chain runs to 64 residues: Large ribosomal subunit protein bL35 (64 aa).

This sequence belongs to the bacterial ribosomal protein bL35 family.

The protein is Large ribosomal subunit protein bL35 of Chlorobium chlorochromatii (strain CaD3).